The sequence spans 561 residues: DNA ligase B (561 aa).

Lysine 125 functions as the N6-AMP-lysine intermediate in the catalytic mechanism.

Belongs to the NAD-dependent DNA ligase family. LigB subfamily.

It catalyses the reaction NAD(+) + (deoxyribonucleotide)n-3'-hydroxyl + 5'-phospho-(deoxyribonucleotide)m = (deoxyribonucleotide)n+m + AMP + beta-nicotinamide D-nucleotide.. Catalyzes the formation of phosphodiester linkages between 5'-phosphoryl and 3'-hydroxyl groups in double-stranded DNA using NAD as a coenzyme and as the energy source for the reaction. This is DNA ligase B from Salmonella choleraesuis (strain SC-B67).